Here is a 637-residue protein sequence, read N- to C-terminus: MNDWSIDDARAGYNVTHWSQGFYGISDHGEVTVSPDPKNPDYKIGLNELAKDMVKAGVALPVLVRFPQILHHRVNSLCQAFDQAIQKYEYQADYLLVYPIKVNQQQTVVEEILASQASKEVPQLGLEAGSKPELMAVLAMAQKASSVIVCNGYKDNEYIRLALIGEKLGHKVYIVLEKLSELKMVLAESKRLGVTPRLGLRARLAFQGKGKWQASGGEKSKFGLSAAQILLVVEQLKQNDMLDSLQLLHFHLGSQIANIRDIRQGVSEAGRFYCELRALGASVNCFDVGGGLAVDYDGTRSQSNNSMNYGLTEYANNIVNVLTDICNEYEQPMPRIISESGRYLTAHHAVLITDVIGTEAYQPEDIQPPAEESPQLLHNMWHSWSELSGRADQRALIEIYHDSQSDLQEAHSLFALGQLSLAERAWAEQANLRVCHEVQGLLSAKNRYHRPIIDELNEKLADKFFVNFSLFQSLPDAWGIDQVFPVLPLSGLDKAPERRAVMLDITCDSDGIVDQYVDGQGIETTLPVPAWSADSPYLIGFFLVGAYQEILGDMHNLFGDTNSAVVRIEDNGVTNIESVLAGDTVADVLRYVNLDAVAFMRTYEELVNLHIAEDERAQILEELQVGLKGYTYLEDFS.

N6-(pyridoxal phosphate)lysine is present on K101. Substrate is bound at residue 286-296; that stretch reads FDVGGGLAVDY.

The protein belongs to the Orn/Lys/Arg decarboxylase class-II family. SpeA subfamily. The cofactor is Mg(2+). It depends on pyridoxal 5'-phosphate as a cofactor.

It catalyses the reaction L-arginine + H(+) = agmatine + CO2. The protein operates within amine and polyamine biosynthesis; agmatine biosynthesis; agmatine from L-arginine: step 1/1. Catalyzes the biosynthesis of agmatine from arginine. The sequence is that of Biosynthetic arginine decarboxylase from Shewanella baltica (strain OS223).